The sequence spans 1260 residues: MLQQFTLLFLYLSIASAKTITGVFDSFNSLTWSNAANYAFKGPGYPTWNAVLGWSLDGTSANPGDTFTLNMPCVFKYTTSQTSVDLTADGVKYATCQFYSGEEFTTFSTLTCTVNDALKSSIKAFGTVTLPIAFNVGGTGSSTDLEDSKCFTAGTNTVTFNDGDKDISIDVEFEKSTVDPSAYLYASRVMPSLNKVTTLFVAPQCENGYTSGTMGFSSSNGDVAIDCSNIHIGITKGLNDWNYPVSSESFSYTKTCTSNGIQIKYQNVPAGYRPFIDAYISATDVNQYTLAYTNDYTCAGSRSQSKPFTLRWTGYKNSDAGSNGIVIVATTRTVTDSTTAVTTLPFNPSVDKTKTIEILQPIPTTTITTSYVGVTTSYSTKTAPIGETATVIVDVPYHTTTTVTSEWTGTITTTTTRTNPTDSIDTVVVQVPSPNPTVSTTEYWSQSFATTTTVTAPPGGTDTVIIREPPNHTVTTTEYWSQSFATTTTVTAPPGGTDSVIIREPPNPTVTTTEYWSQSFATTTTVTAPPGGTDSVIIREPPNPTVTTTEYWSQSYATTTTVTAPPGGTDSVIIREPPNHTVTTTEYWSQSYATTTTVTAPPGGTDTVIIREPPNHTVTTTEYWSQSFATTTTVTGPPSGTDTVIIREPPNPTVTTTEYWSQSYATTTTITAPPGETDTVLIREPPNHTVTTTEYWSQSYATTTTVTAPPGETDTVLIREPPNHTVTTTEYWSQSYATTTTVTAPPGGTDTVIIREPPNPTVTTTEYWSQSFATTTTVTAPPGGTDTVIIYESMSSSKISTSSNDITSIIPSFSRPHYVNSTTSDLSTFESSSMNTPTSISSDGMLLSSTTLVTESETTTESICSDGKECSRLSSSSGIVTNPDSNESSIVTSTVPTASTMSDSLSSTDGISATSSDNVSKSGVSVTTETSVTTIQTTPNPLSSSVTSLTQLSSIPSVSESESKVTFTSNGDNQSGTHDSQSTSTEIEIVTTSSTKVLPPVVSSNTDLTSEPTNTREQPTTLSTTSNSITEDITTSQPTGDNGDNTSSTNPVPTVATSTLASASEEDNKSGSHESASTSLKPSMGENSGLTTSTEIEATTTSPTEAPSPAVSSGTDVTTEPTDTREQPTTLSTTSKTNSESVATTQATNENGGKSPSTDLTSSLTTGTSASTSANSELVTSGSVTGGAVASASNDQSHSTSVTNSNSIVSNTPQTTLSQQVTSSSPSTNTFIASTYDGSGSIIQHSTWLYGLITLLSLFI.

The first 17 residues, 1–17 (MLQQFTLLFLYLSIASA), serve as a signal peptide directing secretion. 4 cysteine pairs are disulfide-bonded: Cys73/Cys150, Cys96/Cys112, Cys205/Cys298, and Cys227/Cys256. 10 tandem repeats follow at residues 433–468 (SPNP…IIRE), 469–504 (PPNH…IIRE), 505–540 (PPNP…IIRE), 541–576 (PPNP…IIRE), 577–612 (PPNH…IIRE), 613–648 (PPNH…IIRE), 649–684 (PPNP…LIRE), 685–720 (PPNH…LIRE), 721–756 (PPNH…IIRE), and 757–792 (PPNP…IIYE). The segment at 433 to 792 (SPNPTVSTTE…GGTDTVIIYE (360 aa)) is 10 X 36 AA tandem repeats. N-linked (GlcNAc...) asparagine glycosylation occurs at Asn471. Asn579 and Asn615 each carry an N-linked (GlcNAc...) asparagine glycan. N-linked (GlcNAc...) asparagine glycans are attached at residues Asn687 and Asn723. N-linked (GlcNAc...) asparagine glycosylation is found at Asn820, Asn886, Asn918, and Asn973. Polar residues-rich tracts occupy residues 896–918 (PTAS…SSDN) and 964–979 (KVTF…GTHD). 2 disordered regions span residues 896–924 (PTAS…KSGV) and 954–1226 (SIPS…SSSP). Residues 980-995 (SQSTSTEIEIVTTSST) show a composition bias toward low complexity. A 2-1 repeat occupies 983 to 1043 (TSTEIEIVTT…TTSQPTGDNG (61 aa)). Residues 983 to 1152 (TSTEIEIVTT…ATTQATNENG (170 aa)) are 2 X 26 AA approximate repeats. Residues 1002–1062 (VSSNTDLTSE…PTVATSTLAS (61 aa)) show a composition bias toward polar residues. Asn1045 and Asn1068 each carry an N-linked (GlcNAc...) asparagine glycan. Residues 1073–1090 (HESASTSLKPSMGENSGL) are compositionally biased toward polar residues. Residues 1091-1110 (TTSTEIEATTTSPTEAPSPA) show a composition bias toward low complexity. Residues 1092 to 1152 (TSTEIEATTT…ATTQATNENG (61 aa)) form a 2-2 repeat. Residues 1111–1154 (VSSGTDVTTEPTDTREQPTTLSTTSKTNSESVATTQATNENGGK) show a composition bias toward polar residues. Low complexity-rich tracts occupy residues 1155–1176 (SPST…SANS) and 1197–1226 (SHST…SSSP).

It belongs to the ALS family. Post-translationally, N-glycosylated and O-glycosylated. The GPI-anchor is attached to the protein in the endoplasmic reticulum and serves to target the protein to the cell surface. There, the glucosamine-inositol phospholipid moiety is cleaved off and the GPI-modified mannoprotein is covalently attached via its lipidless GPI glycan remnant to the 1,6-beta-glucan of the outer cell wall layer.

It localises to the cell membrane. The protein resides in the secreted. It is found in the cell wall. In terms of biological role, major cell surface adhesion protein which mediates both yeast-to-host tissue adherence and yeast aggregation. Acts as a downstream effector of the EFG1 regulatory pathway. Required for rapamycin-induced aggregation of C.albicans. Binds glycans and mediates adherence to endothelial and epithelial cells, thereby playing an important role in the pathogenesis of C.albicans infections. The polypeptide is Agglutinin-like protein 1 (ALS1) (Candida albicans (Yeast)).